Reading from the N-terminus, the 350-residue chain is Isopentenyl-diphosphate delta-isomerase (350 aa).

Residue 15 to 16 (RK) coordinates substrate. FMN contacts are provided by residues serine 73, 74-76 (SMT), serine 104, and asparagine 132. 104–106 (SQR) is a binding site for substrate. Glutamine 167 contributes to the substrate binding site. Glutamate 168 contributes to the Mg(2+) binding site. Residues lysine 199, threonine 229, 279–281 (GLR), and 300–301 (AM) each bind FMN.

This sequence belongs to the IPP isomerase type 2 family. Homooctamer. Dimer of tetramers. The cofactor is FMN. It depends on NADPH as a cofactor. Mg(2+) serves as cofactor.

It is found in the cytoplasm. It catalyses the reaction isopentenyl diphosphate = dimethylallyl diphosphate. Functionally, involved in the biosynthesis of isoprenoids. Catalyzes the 1,3-allylic rearrangement of the homoallylic substrate isopentenyl (IPP) to its allylic isomer, dimethylallyl diphosphate (DMAPP). This is Isopentenyl-diphosphate delta-isomerase from Nostoc sp. (strain PCC 7120 / SAG 25.82 / UTEX 2576).